The primary structure comprises 296 residues: MSQMKSRMETAAKMKDEDKLYRRDGILYSTVLSPPETLDKLKDLQAREDDLILVAYPKCGFNWMVAVLRKIINASTGKDEKPPERPPLVEFLPPTVQEEMAQMPPPRLLGTHLHPDNMPATFFTKKPKILVVFRNPKDTVVSYYHFMNKNPVLPNAESWDKFFSDFMTGDVSWGSYFDHALAWEKRIDDPNVMIVMYEDLKQNLPEGVKKISEFFSLPLTDEQVSSIAGQSTFSAMVENSQKSHGNFGSIFFRKGEVGDWKNHFSEAQSKQMDELYHSKLAGTKLAARMNYDLYCQ.

His112 functions as the Proton acceptor in the catalytic mechanism. Residues Arg134, Ser142, Tyr197, and 253–255 each bind 3'-phosphoadenylyl sulfate; that span reads RKG.

This sequence belongs to the sulfotransferase 1 family.

The protein localises to the cytoplasm. The protein resides in the cytosol. It catalyses the reaction thyroxine + 3'-phosphoadenylyl sulfate = thyroxine sulfate + adenosine 3',5'-bisphosphate + H(+). Strongly inhibited by the divalent metal cations Fe(2+), Hg(2+), Co(2+), Zn(2+), Cu(2+) and Cd(2+). In terms of biological role, sulfotransferase that utilizes 3'-phospho-5'-adenylyl sulfate (PAPS) as sulfonate donor to catalyze the sulfate conjugation of a variety of xenobiotic and endogenous compounds, including dopamine, T3 (triiodo-L-thyronine), T4 (thyroxine), flavonoids, isoflavonoids, and other phenolic compounds. The sequence is that of Sulfotransferase 6B1 from Danio rerio (Zebrafish).